A 113-amino-acid chain; its full sequence is Dolichyl-diphosphooligosaccharide--protein glycosyltransferase subunit dad1 (113 aa).

At 1-30 (MSVSVFSVVSRFLDEYVSSTPQRLKLLDAY) the chain is on the cytoplasmic side. The helical transmembrane segment at 31–51 (LLYILLTGALQFLYCLLVGTF) threads the bilayer. Proline 52 is a topological domain (lumenal). A helical transmembrane segment spans residues 53 to 73 (FNSFLSGFISSVGSFILAVCL). Residues 74 to 92 (RIQINPQNKSDFQGISPER) are Cytoplasmic-facing. Residues 93 to 113 (AFADFLFANTILHLVVVNFIG) form a helical membrane-spanning segment.

The protein belongs to the DAD/OST2 family. In terms of assembly, component of the oligosaccharyltransferase (OST) complex.

It is found in the endoplasmic reticulum membrane. The protein operates within protein modification; protein glycosylation. Its function is as follows. Subunit of the oligosaccharyl transferase (OST) complex that catalyzes the initial transfer of a defined glycan (Glc(3)Man(9)GlcNAc(2) in eukaryotes) from the lipid carrier dolichol-pyrophosphate to an asparagine residue within an Asn-X-Ser/Thr consensus motif in nascent polypeptide chains, the first step in protein N-glycosylation. N-glycosylation occurs cotranslationally and the complex associates with the Sec61 complex at the channel-forming translocon complex that mediates protein translocation across the endoplasmic reticulum (ER). All subunits are required for a maximal enzyme activity. The sequence is that of Dolichyl-diphosphooligosaccharide--protein glycosyltransferase subunit dad1 from Xenopus laevis (African clawed frog).